We begin with the raw amino-acid sequence, 61 residues long: Large ribosomal subunit protein uL30 (61 aa).

The protein belongs to the universal ribosomal protein uL30 family. Part of the 50S ribosomal subunit.

The protein is Large ribosomal subunit protein uL30 of Rubrobacter xylanophilus (strain DSM 9941 / JCM 11954 / NBRC 16129 / PRD-1).